We begin with the raw amino-acid sequence, 365 residues long: Chaperone protein DnaJ (365 aa).

Residues 5-71 (DFYEILGIAK…QKRQAYDQFG (67 aa)) enclose the J domain. The CR-type zinc-finger motif lies at 128–206 (GTTVKIRIPK…CHGKGVVHKQ (79 aa)). Residues Cys-141, Cys-144, Cys-158, Cys-161, Cys-180, Cys-183, Cys-194, and Cys-197 each contribute to the Zn(2+) site. CXXCXGXG motif repeat units follow at residues 141–148 (CDTCSGTG), 158–165 (CLTCGGAG), 180–187 (CNACSGTG), and 194–201 (CNNCHGKG).

Belongs to the DnaJ family. In terms of assembly, homodimer. Zn(2+) is required as a cofactor.

It is found in the cytoplasm. Its function is as follows. Participates actively in the response to hyperosmotic and heat shock by preventing the aggregation of stress-denatured proteins and by disaggregating proteins, also in an autonomous, DnaK-independent fashion. Unfolded proteins bind initially to DnaJ; upon interaction with the DnaJ-bound protein, DnaK hydrolyzes its bound ATP, resulting in the formation of a stable complex. GrpE releases ADP from DnaK; ATP binding to DnaK triggers the release of the substrate protein, thus completing the reaction cycle. Several rounds of ATP-dependent interactions between DnaJ, DnaK and GrpE are required for fully efficient folding. Also involved, together with DnaK and GrpE, in the DNA replication of plasmids through activation of initiation proteins. This is Chaperone protein DnaJ from Vesicomyosocius okutanii subsp. Calyptogena okutanii (strain HA).